Here is a 256-residue protein sequence, read N- to C-terminus: Undecaprenyl-diphosphatase (256 aa).

7 helical membrane-spanning segments follow: residues 39–59 (PTDALSCSIFLHTGTMLAVLV), 77–97 (RTVIVATLFTGITGVPLYMLF), 101–121 (FTGGEQATLLIGSLLIATGLM), 135–155 (ISTKDMVLLGLAQGFSILPGV), 176–196 (LMVSFIISVPAVLGAIALDCL), 206–226 (LPGAVMLASSFITGYATMDVL), and 233–253 (VSFSWFCITMGMITLALTALP).

This sequence belongs to the UppP family.

It localises to the cell membrane. It carries out the reaction di-trans,octa-cis-undecaprenyl diphosphate + H2O = di-trans,octa-cis-undecaprenyl phosphate + phosphate + H(+). Catalyzes the dephosphorylation of undecaprenyl diphosphate (UPP). In Methanothrix thermoacetophila (strain DSM 6194 / JCM 14653 / NBRC 101360 / PT) (Methanosaeta thermophila), this protein is Undecaprenyl-diphosphatase.